The chain runs to 296 residues: 4-diphosphocytidyl-2-C-methyl-D-erythritol kinase (296 aa).

The active site involves Lys13. 98–108 is a binding site for ATP; that stretch reads PVAAGIGGGSA. The active site involves Asp140.

Belongs to the GHMP kinase family. IspE subfamily.

It carries out the reaction 4-CDP-2-C-methyl-D-erythritol + ATP = 4-CDP-2-C-methyl-D-erythritol 2-phosphate + ADP + H(+). Its pathway is isoprenoid biosynthesis; isopentenyl diphosphate biosynthesis via DXP pathway; isopentenyl diphosphate from 1-deoxy-D-xylulose 5-phosphate: step 3/6. Its function is as follows. Catalyzes the phosphorylation of the position 2 hydroxy group of 4-diphosphocytidyl-2C-methyl-D-erythritol. This is 4-diphosphocytidyl-2-C-methyl-D-erythritol kinase from Rhodopseudomonas palustris (strain HaA2).